The primary structure comprises 121 residues: Large ribosomal subunit protein bL12 (121 aa).

The protein belongs to the bacterial ribosomal protein bL12 family. As to quaternary structure, homodimer. Part of the ribosomal stalk of the 50S ribosomal subunit. Forms a multimeric L10(L12)X complex, where L10 forms an elongated spine to which 2 to 4 L12 dimers bind in a sequential fashion. Binds GTP-bound translation factors.

Functionally, forms part of the ribosomal stalk which helps the ribosome interact with GTP-bound translation factors. Is thus essential for accurate translation. The sequence is that of Large ribosomal subunit protein bL12 from Leuconostoc citreum (strain KM20).